Here is a 192-residue protein sequence, read N- to C-terminus: UPF0301 protein Bcep18194_A3962 (192 aa).

This sequence belongs to the UPF0301 (AlgH) family.

In Burkholderia lata (strain ATCC 17760 / DSM 23089 / LMG 22485 / NCIMB 9086 / R18194 / 383), this protein is UPF0301 protein Bcep18194_A3962.